The sequence spans 361 residues: S-adenosylmethionine:tRNA ribosyltransferase-isomerase (361 aa).

The protein belongs to the QueA family. Monomer.

Its subcellular location is the cytoplasm. It carries out the reaction 7-aminomethyl-7-carbaguanosine(34) in tRNA + S-adenosyl-L-methionine = epoxyqueuosine(34) in tRNA + adenine + L-methionine + 2 H(+). Its pathway is tRNA modification; tRNA-queuosine biosynthesis. Functionally, transfers and isomerizes the ribose moiety from AdoMet to the 7-aminomethyl group of 7-deazaguanine (preQ1-tRNA) to give epoxyqueuosine (oQ-tRNA). This is S-adenosylmethionine:tRNA ribosyltransferase-isomerase from Actinobacillus pleuropneumoniae serotype 7 (strain AP76).